We begin with the raw amino-acid sequence, 448 residues long: Acyl-lipid (9-3)-desaturase (448 aa).

The Cytochrome b5 heme-binding domain occupies 6-90 (KKYITSDELK…LKDYSVSEVS (85 aa)). Heme-binding residues include His-41 and His-64. Transmembrane regions (helical) follow at residues 112 to 132 (IMFA…YGVL) and 137 to 157 (VLVH…SGWI). Residues 159–163 (HDAGH) carry the Histidine box-1 motif. Residues 172-192 (LNKFMGIFAANCLSGISIGWW) form a helical membrane-spanning segment. The Histidine box-2 motif lies at 196-200 (HNAHH). The next 3 helical transmembrane spans lie at 212–232 (LQYI…TSHF), 254–274 (FYPI…IMLL), and 286–306 (LLGC…LPNW). Residues 373 to 377 (QIEHH) carry the Histidine box-3 motif.

Belongs to the fatty acid desaturase type 1 family.

It is found in the endoplasmic reticulum membrane. The catalysed reaction is (9Z,12Z,15Z)-octadecatrienoyl-containing glycerolipid + 2 Fe(II)-[cytochrome b5] + O2 + 2 H(+) = (6Z,9Z,12Z,15Z)-octadecatetraenoyl-containing glycerolipid + 2 Fe(III)-[cytochrome b5] + 2 H2O. The enzyme catalyses a (9Z,12Z)-octadecadienoyl-containing glycerolipid + 2 Fe(II)-[cytochrome b5] + O2 + 2 H(+) = (6Z,9Z,12Z)-octadecatrienoyl-containing glycerolipid + 2 Fe(III)-[cytochrome b5] + 2 H2O. Its pathway is lipid metabolism; polyunsaturated fatty acid biosynthesis. In terms of biological role, fatty acid desaturase able to introduce a delta(6)-double bond into delta(9)-unsaturated fatty-acid substrates. Can use both linoleic acid (18:2(9Z,12Z)) and alpha-linolenic acid (18:3(9Z,12Z,15Z)) as substrates. The polypeptide is Acyl-lipid (9-3)-desaturase (Borago officinalis (Bourrache)).